We begin with the raw amino-acid sequence, 216 residues long: Adenylate kinase (216 aa).

An ATP-binding site is contributed by 10–15 (GAGKGT). Residues 30-59 (STGDIFRAAIKNQTPMGVEAKKFIDKGELV) form an NMP region. AMP-binding positions include threonine 31, arginine 36, 57–59 (ELV), 85–88 (GFPR), and glutamine 92. The segment at 126–164 (GRFICRNCGTTYHRLYNPTKVEGTCDVCGGHDFYQRDDD) is LID. Residue arginine 127 participates in ATP binding. 2 residues coordinate Zn(2+): cysteine 130 and cysteine 133. 136 to 137 (TY) contributes to the ATP binding site. Zn(2+)-binding residues include cysteine 150 and cysteine 153. AMP is bound by residues arginine 161 and arginine 172. Position 200 (glutamine 200) interacts with ATP.

The protein belongs to the adenylate kinase family. As to quaternary structure, monomer.

It is found in the cytoplasm. The enzyme catalyses AMP + ATP = 2 ADP. It functions in the pathway purine metabolism; AMP biosynthesis via salvage pathway; AMP from ADP: step 1/1. Catalyzes the reversible transfer of the terminal phosphate group between ATP and AMP. Plays an important role in cellular energy homeostasis and in adenine nucleotide metabolism. This chain is Adenylate kinase, found in Limosilactobacillus fermentum (strain NBRC 3956 / LMG 18251) (Lactobacillus fermentum).